The chain runs to 154 residues: Myoglobin (154 aa).

The 147-residue stretch at 2-148 (GLSDGEWQLV…FRNDMAAKYK (147 aa)) folds into the Globin domain. Serine 4 is modified (phosphoserine). Histidine 65 is a nitrite binding site. Histidine 65 lines the O2 pocket. At threonine 68 the chain carries Phosphothreonine. A heme b-binding site is contributed by histidine 94.

This sequence belongs to the globin family. In terms of assembly, monomeric.

The protein resides in the cytoplasm. Its subcellular location is the sarcoplasm. It catalyses the reaction Fe(III)-heme b-[protein] + nitric oxide + H2O = Fe(II)-heme b-[protein] + nitrite + 2 H(+). The enzyme catalyses H2O2 + AH2 = A + 2 H2O. Functionally, monomeric heme protein which primary function is to store oxygen and facilitate its diffusion within muscle tissues. Reversibly binds oxygen through a pentacoordinated heme iron and enables its timely and efficient release as needed during periods of heightened demand. Depending on the oxidative conditions of tissues and cells, and in addition to its ability to bind oxygen, it also has a nitrite reductase activity whereby it regulates the production of bioactive nitric oxide. Under stress conditions, like hypoxia and anoxia, it also protects cells against reactive oxygen species thanks to its pseudoperoxidase activity. In Callithrix jacchus (White-tufted-ear marmoset), this protein is Myoglobin (MB).